A 129-amino-acid chain; its full sequence is Glycine cleavage system H protein (129 aa).

A Lipoyl-binding domain is found at 24 to 106 (SYTVGITEHA…YGEGWFFRVM (83 aa)). Lys-65 bears the N6-lipoyllysine mark.

Belongs to the GcvH family. In terms of assembly, the glycine cleavage system is composed of four proteins: P, T, L and H. (R)-lipoate serves as cofactor.

In terms of biological role, the glycine cleavage system catalyzes the degradation of glycine. The H protein shuttles the methylamine group of glycine from the P protein to the T protein. In Shewanella sp. (strain MR-7), this protein is Glycine cleavage system H protein.